A 763-amino-acid chain; its full sequence is Phosphoglycerol transferase I (763 aa).

4 helical membrane passes run 1–21 (MSELLSVALFLASVLIYAWKA), 26–46 (WWFAATLTVLGLFVILNITLY), 77–97 (ILPGIGIALALVAVFGALGWI), and 108–128 (VGYSLLALLLALGSVDASPAF).

Belongs to the OpgB family.

It localises to the cell inner membrane. It catalyses the reaction a phosphatidylglycerol + a membrane-derived-oligosaccharide D-glucose = a 1,2-diacyl-sn-glycerol + a membrane-derived-oligosaccharide 6-(glycerophospho)-D-glucose.. It functions in the pathway glycan metabolism; osmoregulated periplasmic glucan (OPG) biosynthesis. Transfers a phosphoglycerol residue from phosphatidylglycerol to the membrane-bound nascent glucan backbones. This chain is Phosphoglycerol transferase I, found in Salmonella paratyphi B (strain ATCC BAA-1250 / SPB7).